A 423-amino-acid polypeptide reads, in one-letter code: Histidine--tRNA ligase (423 aa).

The protein belongs to the class-II aminoacyl-tRNA synthetase family. In terms of assembly, homodimer.

It localises to the cytoplasm. The enzyme catalyses tRNA(His) + L-histidine + ATP = L-histidyl-tRNA(His) + AMP + diphosphate + H(+). The polypeptide is Histidine--tRNA ligase (Staphylococcus haemolyticus (strain JCSC1435)).